A 147-amino-acid polypeptide reads, in one-letter code: Cyanate hydratase (147 aa).

Catalysis depends on residues Arg88, Glu91, and Ser114.

It belongs to the cyanase family.

The enzyme catalyses cyanate + hydrogencarbonate + 3 H(+) = NH4(+) + 2 CO2. In terms of biological role, catalyzes the reaction of cyanate with bicarbonate to produce ammonia and carbon dioxide. The chain is Cyanate hydratase from Acaryochloris marina (strain MBIC 11017).